The sequence spans 706 residues: Elongation factor G (706 aa).

In terms of domain architecture, tr-type G spans 8–297 (ERVRNIGIAA…AVIDYLPAPT (290 aa)). Residues 17–24 (AHIDAGKT), 96–100 (DTPGH), and 150–153 (NKMD) each bind GTP.

It belongs to the TRAFAC class translation factor GTPase superfamily. Classic translation factor GTPase family. EF-G/EF-2 subfamily.

It is found in the cytoplasm. Catalyzes the GTP-dependent ribosomal translocation step during translation elongation. During this step, the ribosome changes from the pre-translocational (PRE) to the post-translocational (POST) state as the newly formed A-site-bound peptidyl-tRNA and P-site-bound deacylated tRNA move to the P and E sites, respectively. Catalyzes the coordinated movement of the two tRNA molecules, the mRNA and conformational changes in the ribosome. The polypeptide is Elongation factor G (Cyanothece sp. (strain PCC 7425 / ATCC 29141)).